Here is a 378-residue protein sequence, read N- to C-terminus: Queuine tRNA-ribosyltransferase (378 aa).

Aspartate 91 acts as the Proton acceptor in catalysis. Substrate-binding positions include 91–95 (DSGGF), aspartate 145, glutamine 189, and glycine 216. Positions 247-253 (GVGKPED) are RNA binding. Residue aspartate 266 is the Nucleophile of the active site. An RNA binding; important for wobble base 34 recognition region spans residues 271–275 (TRNAR). Cysteine 304, cysteine 306, cysteine 309, and histidine 335 together coordinate Zn(2+).

It belongs to the queuine tRNA-ribosyltransferase family. As to quaternary structure, homodimer. Within each dimer, one monomer is responsible for RNA recognition and catalysis, while the other monomer binds to the replacement base PreQ1. Zn(2+) is required as a cofactor.

It catalyses the reaction 7-aminomethyl-7-carbaguanine + guanosine(34) in tRNA = 7-aminomethyl-7-carbaguanosine(34) in tRNA + guanine. It participates in tRNA modification; tRNA-queuosine biosynthesis. In terms of biological role, catalyzes the base-exchange of a guanine (G) residue with the queuine precursor 7-aminomethyl-7-deazaguanine (PreQ1) at position 34 (anticodon wobble position) in tRNAs with GU(N) anticodons (tRNA-Asp, -Asn, -His and -Tyr). Catalysis occurs through a double-displacement mechanism. The nucleophile active site attacks the C1' of nucleotide 34 to detach the guanine base from the RNA, forming a covalent enzyme-RNA intermediate. The proton acceptor active site deprotonates the incoming PreQ1, allowing a nucleophilic attack on the C1' of the ribose to form the product. After dissociation, two additional enzymatic reactions on the tRNA convert PreQ1 to queuine (Q), resulting in the hypermodified nucleoside queuosine (7-(((4,5-cis-dihydroxy-2-cyclopenten-1-yl)amino)methyl)-7-deazaguanosine). This is Queuine tRNA-ribosyltransferase from Vibrio vulnificus (strain CMCP6).